The following is a 499-amino-acid chain: Calcium/calmodulin-dependent protein kinase type II subunit delta (499 aa).

Alanine 2 is subject to N-acetylalanine. A Protein kinase domain is found at 14-272 (YQLFEELGKG…ASEALKHPWI (259 aa)). ATP is bound by residues 20–28 (LGKGAFSVV) and lysine 43. Residue aspartate 136 is the Proton acceptor of the active site. The segment at 283–292 (HRQETVDCLK) is autoinhibitory domain. Threonine 287 carries the post-translational modification Phosphothreonine; by autocatalysis. The interval 291–301 (LKKFNARRKLK) is calmodulin-binding. 2 positions are modified to phosphothreonine; by autocatalysis: threonine 306 and threonine 307. At serine 315 the chain carries Phosphoserine. At lysine 318 the chain carries N6-acetyllysine. 2 positions are modified to phosphoserine: serine 319 and serine 330. A Phosphothreonine modification is found at threonine 331. Residue serine 333 is modified to Phosphoserine. Phosphothreonine occurs at positions 336 and 337. Phosphoserine occurs at positions 404, 490, and 494.

This sequence belongs to the protein kinase superfamily. CAMK Ser/Thr protein kinase family. CaMK subfamily. CAMK2 is composed of 4 different chains: alpha (CAMK2A), beta (CAMK2B), gamma (CAMK2G), and delta (CAMK2D). The different isoforms assemble into homo- or heteromultimeric holoenzymes composed of 12 subunits with two hexameric rings stacked one on top of the other. Interacts with RRAD and CACNB2. Autophosphorylation of Thr-287 following activation by Ca(2+)/calmodulin. Phosphorylation of Thr-287 locks the kinase into an activated state. As to expression, expressed in cardiac muscle and skeletal muscle. Isoform Delta 3, isoform Delta 2, isoform Delta 8 and isoform Delta 9 are expressed in cardiac muscle. Isoform Delta 11 is expressed in skeletal muscle.

The protein resides in the cell membrane. Its subcellular location is the sarcolemma. It is found in the sarcoplasmic reticulum membrane. It catalyses the reaction L-seryl-[protein] + ATP = O-phospho-L-seryl-[protein] + ADP + H(+). It carries out the reaction L-threonyl-[protein] + ATP = O-phospho-L-threonyl-[protein] + ADP + H(+). Its activity is regulated as follows. Activated by Ca(2+)/calmodulin. Binding of calmodulin results in conformational change that relieves intrasteric autoinhibition and allows autophosphorylation of Thr-287 which turns the kinase in a constitutively active form and confers to the kinase a Ca(2+)-independent activity. Its function is as follows. Calcium/calmodulin-dependent protein kinase involved in the regulation of Ca(2+) homeostatis and excitation-contraction coupling (ECC) in heart by targeting ion channels, transporters and accessory proteins involved in Ca(2+) influx into the myocyte, Ca(2+) release from the sarcoplasmic reticulum (SR), SR Ca(2+) uptake and Na(+) and K(+) channel transport. Targets also transcription factors and signaling molecules to regulate heart function. In its activated form, is involved in the pathogenesis of dilated cardiomyopathy and heart failure. Contributes to cardiac decompensation and heart failure by regulating SR Ca(2+) release via direct phosphorylation of RYR2 Ca(2+) channel on 'Ser-2808'. In the nucleus, phosphorylates the MEF2 repressor HDAC4, promoting its nuclear export and binding to 14-3-3 protein, and expression of MEF2 and genes involved in the hypertrophic program. Is essential for left ventricular remodeling responses to myocardial infarction. In pathological myocardial remodeling acts downstream of the beta adrenergic receptor signaling cascade to regulate key proteins involved in ECC. Regulates Ca(2+) influx to myocytes by binding and phosphorylating the L-type Ca(2+) channel subunit beta-2 CACNB2. In addition to Ca(2+) channels, can target and regulate the cardiac sarcolemmal Na(+) channel Nav1.5/SCN5A and the K+ channel Kv4.3/KCND3, which contribute to arrhythmogenesis in heart failure. Phosphorylates phospholamban (PLN/PLB), an endogenous inhibitor of SERCA2A/ATP2A2, contributing to the enhancement of SR Ca(2+) uptake that may be important in frequency-dependent acceleration of relaxation (FDAR) and maintenance of contractile function during acidosis. May participate in the modulation of skeletal muscle function in response to exercise, by regulating SR Ca(2+) transport through phosphorylation of PLN/PLB and triadin, a ryanodine receptor-coupling factor. In response to interferon-gamma (IFN-gamma) stimulation, catalyzes phosphorylation of STAT1, stimulating the JAK-STAT signaling pathway. This is Calcium/calmodulin-dependent protein kinase type II subunit delta (CAMK2D) from Homo sapiens (Human).